The chain runs to 285 residues: 2-dehydro-3-deoxyphosphooctonate aldolase (285 aa).

Belongs to the KdsA family.

The protein localises to the cytoplasm. It catalyses the reaction D-arabinose 5-phosphate + phosphoenolpyruvate + H2O = 3-deoxy-alpha-D-manno-2-octulosonate-8-phosphate + phosphate. Its pathway is carbohydrate biosynthesis; 3-deoxy-D-manno-octulosonate biosynthesis; 3-deoxy-D-manno-octulosonate from D-ribulose 5-phosphate: step 2/3. The protein operates within bacterial outer membrane biogenesis; lipopolysaccharide biosynthesis. This is 2-dehydro-3-deoxyphosphooctonate aldolase from Albidiferax ferrireducens (strain ATCC BAA-621 / DSM 15236 / T118) (Rhodoferax ferrireducens).